Here is a 483-residue protein sequence, read N- to C-terminus: Regulatory protein ViaA (483 aa).

The protein belongs to the ViaA family. As to quaternary structure, homodimer. Interacts with RavA.

The protein resides in the cytoplasm. Functionally, component of the RavA-ViaA chaperone complex, which may act on the membrane to optimize the function of some of the respiratory chains. ViaA stimulates the ATPase activity of RavA. This is Regulatory protein ViaA from Escherichia coli O17:K52:H18 (strain UMN026 / ExPEC).